Reading from the N-terminus, the 335-residue chain is Adenosine deaminase (335 aa).

Positions 12 and 14 each coordinate Zn(2+). Positions 14 and 16 each coordinate substrate. Histidine 197 contributes to the Zn(2+) binding site. The active-site Proton donor is glutamate 200. Aspartate 278 is a binding site for Zn(2+).

The protein belongs to the metallo-dependent hydrolases superfamily. Adenosine and AMP deaminases family. Adenosine deaminase subfamily. The cofactor is Zn(2+).

It carries out the reaction adenosine + H2O + H(+) = inosine + NH4(+). The enzyme catalyses 2'-deoxyadenosine + H2O + H(+) = 2'-deoxyinosine + NH4(+). Catalyzes the hydrolytic deamination of adenosine and 2-deoxyadenosine. The sequence is that of Adenosine deaminase from Clostridium botulinum (strain ATCC 19397 / Type A).